Reading from the N-terminus, the 279-residue chain is Putative Delta(7)-sterol-C5(6)-desaturase 2 (279 aa).

The next 2 membrane-spanning stretches (helical) occupy residues 48 to 68 and 127 to 147; these read LAGNILYFISGFLWCFYIYYL and FLCFLYIALYLVLVEFMIYWV. The region spanning 134–263 is the Fatty acid hydroxylase domain; sequence ALYLVLVEFM…TIWMDWMFGS (130 aa). The Histidine box-1 motif lies at 148-152; the sequence is HKELH. The short motif at 162–166 is the Histidine box-2 element; it reads HATHH. A helical transmembrane segment spans residues 194–214; the sequence is HVIALFIVPIHLITHLSLLFL. A Histidine box-3 motif is present at residues 239 to 243; sequence HTIHH.

Belongs to the sterol desaturase family. Requires Fe cation as cofactor.

The protein localises to the endoplasmic reticulum membrane. It catalyses the reaction a Delta(7)-sterol + 2 Fe(II)-[cytochrome b5] + O2 + 2 H(+) = a Delta(5),Delta(7)-sterol + 2 Fe(III)-[cytochrome b5] + 2 H2O. In Arabidopsis thaliana (Mouse-ear cress), this protein is Putative Delta(7)-sterol-C5(6)-desaturase 2 (HDF7).